The following is a 157-amino-acid chain: 2-C-methyl-D-erythritol 2,4-cyclodiphosphate synthase (157 aa).

A divalent metal cation is bound by residues aspartate 8 and histidine 10. 4-CDP-2-C-methyl-D-erythritol 2-phosphate-binding positions include 8–10 (DVH) and 34–35 (HS). Histidine 42 contributes to the a divalent metal cation binding site. Residues 56-58 (DIG), 61-65 (FPDTD), 100-106 (AQAPKMA), 132-135 (TTTE), phenylalanine 139, and arginine 142 contribute to the 4-CDP-2-C-methyl-D-erythritol 2-phosphate site.

Belongs to the IspF family. In terms of assembly, homotrimer. The cofactor is a divalent metal cation.

The enzyme catalyses 4-CDP-2-C-methyl-D-erythritol 2-phosphate = 2-C-methyl-D-erythritol 2,4-cyclic diphosphate + CMP. Its pathway is isoprenoid biosynthesis; isopentenyl diphosphate biosynthesis via DXP pathway; isopentenyl diphosphate from 1-deoxy-D-xylulose 5-phosphate: step 4/6. In terms of biological role, involved in the biosynthesis of isopentenyl diphosphate (IPP) and dimethylallyl diphosphate (DMAPP), two major building blocks of isoprenoid compounds. Catalyzes the conversion of 4-diphosphocytidyl-2-C-methyl-D-erythritol 2-phosphate (CDP-ME2P) to 2-C-methyl-D-erythritol 2,4-cyclodiphosphate (ME-CPP) with a corresponding release of cytidine 5-monophosphate (CMP). The protein is 2-C-methyl-D-erythritol 2,4-cyclodiphosphate synthase of Pseudomonas fluorescens (strain Pf0-1).